Here is a 453-residue protein sequence, read N- to C-terminus: MFDNLTDRLSRTLRNISGRGRLTEDNVKDTLREVRMALLEADVALPVVREFINRVKEKAVGHEVNKSLTPGQEFVKIVRNELVAAMGEENQTLNLAAQPPAVVLMAGLQGAGKTTSVGKLGKFLREKHKKKVLVVSADVYRPAAIKQLETLAEQVGVDFFPSDVGQKPVDIVNAALKEAKLKFYDVLLVDTAGRLHVDEAMMDEIKQVHASINPVETLFVVDAMTGQDAANTAKAFNEALPLTGVVLTKVDGDARGGAALSIRHITGKPIKFLGVGEKTEALEPFHPDRIASRILGMGDVLSLIEDIESKVDRAQAEKLASKLKKGDGFDLNDFLEQLRQMKNMGGMASLMGKLPGMGQIPDNVKSQMDDKVLVRMEAIINSMTMKERAKPEIIKGSRKRRIAAGCGMQVQDVNRLLKQFDDMQRMMKKMKKGGMAKMMRSMKGMMPPGFPGR.

GTP is bound by residues 107–114 (GLQGAGKT), 190–194 (DTAGR), and 248–251 (TKVD).

This sequence belongs to the GTP-binding SRP family. SRP54 subfamily. As to quaternary structure, part of the signal recognition particle protein translocation system, which is composed of SRP and FtsY. SRP is a ribonucleoprotein composed of Ffh and a 4.5S RNA molecule.

The protein localises to the cytoplasm. It carries out the reaction GTP + H2O = GDP + phosphate + H(+). In terms of biological role, involved in targeting and insertion of nascent membrane proteins into the cytoplasmic membrane. Binds to the hydrophobic signal sequence of the ribosome-nascent chain (RNC) as it emerges from the ribosomes. The SRP-RNC complex is then targeted to the cytoplasmic membrane where it interacts with the SRP receptor FtsY. Interaction with FtsY leads to the transfer of the RNC complex to the Sec translocase for insertion into the membrane, the hydrolysis of GTP by both Ffh and FtsY, and the dissociation of the SRP-FtsY complex into the individual components. In Escherichia coli O157:H7, this protein is Signal recognition particle protein.